Here is a 405-residue protein sequence, read N- to C-terminus: S-adenosylmethionine synthase (405 aa).

ATP is bound at residue H19. Mg(2+) is bound at residue D21. E47 is a K(+) binding site. L-methionine is bound by residues E60 and Q103. The flexible loop stretch occupies residues 103–113; sequence QSADIAQGVDK. Residues 179–181, 246–247, D255, 261–262, A278, and K282 contribute to the ATP site; these read DGK, RF, and RK. D255 contributes to the L-methionine binding site. K286 contacts L-methionine.

Belongs to the AdoMet synthase family. In terms of assembly, homotetramer; dimer of dimers. The cofactor is Mg(2+). Requires K(+) as cofactor.

Its subcellular location is the cytoplasm. It catalyses the reaction L-methionine + ATP + H2O = S-adenosyl-L-methionine + phosphate + diphosphate. The protein operates within amino-acid biosynthesis; S-adenosyl-L-methionine biosynthesis; S-adenosyl-L-methionine from L-methionine: step 1/1. In terms of biological role, catalyzes the formation of S-adenosylmethionine (AdoMet) from methionine and ATP. The overall synthetic reaction is composed of two sequential steps, AdoMet formation and the subsequent tripolyphosphate hydrolysis which occurs prior to release of AdoMet from the enzyme. The chain is S-adenosylmethionine synthase from Shouchella clausii (strain KSM-K16) (Alkalihalobacillus clausii).